The following is an 87-amino-acid chain: Diazepam-binding inhibitor-like 5 (87 aa).

Positions 2–87 (SQVEFEMACA…VEELKKNETC (86 aa)) constitute an ACB domain. An acyl-CoA-binding positions include 29 to 33 (YSFYK), Lys-55, and Tyr-74.

This sequence belongs to the ACBP family. As to expression, testis.

It is found in the cytoplasm. May be involved in the energy metabolism of the mature sperm. The protein is Diazepam-binding inhibitor-like 5 (Dbil5) of Rattus norvegicus (Rat).